A 283-amino-acid chain; its full sequence is Undecaprenyl-diphosphatase (283 aa).

7 helical membrane-spanning segments follow: residues 46 to 66, 95 to 115, 127 to 147, 154 to 174, 200 to 220, 227 to 247, and 259 to 279; these read PGVS…IAYF, VAMV…KFFW, VPSI…AECM, LGGV…LAVI, FSFL…LKSA, AGPL…WLAI, and TWIF…WWAF.

The protein belongs to the UppP family.

The protein resides in the cell inner membrane. The catalysed reaction is di-trans,octa-cis-undecaprenyl diphosphate + H2O = di-trans,octa-cis-undecaprenyl phosphate + phosphate + H(+). Catalyzes the dephosphorylation of undecaprenyl diphosphate (UPP). Confers resistance to bacitracin. This chain is Undecaprenyl-diphosphatase, found in Synechococcus sp. (strain CC9902).